Consider the following 505-residue polypeptide: Cytochrome P450 2K6 (505 aa).

A helical transmembrane segment spans residues 7 to 27; sequence FLLQGSPTGTILGALLLFLVI. C448 lines the heme pocket.

This sequence belongs to the cytochrome P450 family. Heme is required as a cofactor. As to expression, detected in liver and ovary.

The protein resides in the endoplasmic reticulum membrane. It is found in the microsome membrane. Functionally, metabolizes aflatoxin B1 (AFB1) to the cytotoxic derivative AFB1 exo-8,9-epoxide. Does not show activity towards lauric acid. In Danio rerio (Zebrafish), this protein is Cytochrome P450 2K6.